Reading from the N-terminus, the 119-residue chain is Large ribosomal subunit protein bL20 (119 aa).

Belongs to the bacterial ribosomal protein bL20 family.

Its function is as follows. Binds directly to 23S ribosomal RNA and is necessary for the in vitro assembly process of the 50S ribosomal subunit. It is not involved in the protein synthesizing functions of that subunit. This is Large ribosomal subunit protein bL20 from Shewanella woodyi (strain ATCC 51908 / MS32).